Reading from the N-terminus, the 131-residue chain is Small ribosomal subunit protein uS11 (131 aa).

Belongs to the universal ribosomal protein uS11 family. As to quaternary structure, part of the 30S ribosomal subunit. Interacts with proteins S7 and S18. Binds to IF-3.

Its function is as follows. Located on the platform of the 30S subunit, it bridges several disparate RNA helices of the 16S rRNA. Forms part of the Shine-Dalgarno cleft in the 70S ribosome. This chain is Small ribosomal subunit protein uS11, found in Halorhodospira halophila (strain DSM 244 / SL1) (Ectothiorhodospira halophila (strain DSM 244 / SL1)).